The chain runs to 123 residues: Seripauperin-16 (123 aa).

Positions 1-20 are cleaved as a signal peptide; that stretch reads MVKLTSIAAGVAAIAAGVAA.

This sequence belongs to the SRP1/TIP1 family. Seripauperin subfamily.

The sequence is that of Seripauperin-16 (PAU16) from Saccharomyces cerevisiae (strain ATCC 204508 / S288c) (Baker's yeast).